Here is a 188-residue protein sequence, read N- to C-terminus: Ribosome-recycling factor (188 aa).

Belongs to the RRF family.

The protein localises to the cytoplasm. Responsible for the release of ribosomes from messenger RNA at the termination of protein biosynthesis. May increase the efficiency of translation by recycling ribosomes from one round of translation to another. In Anaeromyxobacter sp. (strain K), this protein is Ribosome-recycling factor.